We begin with the raw amino-acid sequence, 622 residues long: 1-deoxy-D-xylulose-5-phosphate synthase (622 aa).

Residues H80 and 121-123 each bind thiamine diphosphate; that span reads GHS. D152 contacts Mg(2+). Residues 153–154, N181, Y288, and E370 contribute to the thiamine diphosphate site; that span reads GA. N181 is a Mg(2+) binding site.

It belongs to the transketolase family. DXPS subfamily. In terms of assembly, homodimer. It depends on Mg(2+) as a cofactor. Requires thiamine diphosphate as cofactor.

The catalysed reaction is D-glyceraldehyde 3-phosphate + pyruvate + H(+) = 1-deoxy-D-xylulose 5-phosphate + CO2. The protein operates within metabolic intermediate biosynthesis; 1-deoxy-D-xylulose 5-phosphate biosynthesis; 1-deoxy-D-xylulose 5-phosphate from D-glyceraldehyde 3-phosphate and pyruvate: step 1/1. Its function is as follows. Catalyzes the acyloin condensation reaction between C atoms 2 and 3 of pyruvate and glyceraldehyde 3-phosphate to yield 1-deoxy-D-xylulose-5-phosphate (DXP). This Shewanella putrefaciens (strain CN-32 / ATCC BAA-453) protein is 1-deoxy-D-xylulose-5-phosphate synthase.